A 619-amino-acid polypeptide reads, in one-letter code: DNA mismatch repair protein MutL (619 aa).

Basic and acidic residues predominate over residues 368–378; that stretch reads VDEPKQVDEPK. Residues 368-403 form a disordered region; the sequence is VDEPKQVDEPKQSSPVQEPKEEIPSFLPTVESKQND.

Belongs to the DNA mismatch repair MutL/HexB family.

Functionally, this protein is involved in the repair of mismatches in DNA. It is required for dam-dependent methyl-directed DNA mismatch repair. May act as a 'molecular matchmaker', a protein that promotes the formation of a stable complex between two or more DNA-binding proteins in an ATP-dependent manner without itself being part of a final effector complex. The polypeptide is DNA mismatch repair protein MutL (Geobacillus sp. (strain WCH70)).